Consider the following 58-residue polypeptide: ATP synthase subunit a (58 aa).

2 helical membrane passes run 11–31 (EIFY…LTGL) and 35–55 (VAIL…NDAI).

The protein belongs to the ATPase A chain family. F-type ATPases have 2 components, CF(1) - the catalytic core - and CF(0) - the membrane proton channel. CF(1) has five subunits: alpha(3), beta(3), gamma(1), delta(1), epsilon(1). CF(0) has three main subunits: a, b and c.

It localises to the mitochondrion inner membrane. Functionally, mitochondrial membrane ATP synthase (F(1)F(0) ATP synthase or Complex V) produces ATP from ADP in the presence of a proton gradient across the membrane which is generated by electron transport complexes of the respiratory chain. F-type ATPases consist of two structural domains, F(1) - containing the extramembraneous catalytic core and F(0) - containing the membrane proton channel, linked together by a central stalk and a peripheral stalk. During catalysis, ATP synthesis in the catalytic domain of F(1) is coupled via a rotary mechanism of the central stalk subunits to proton translocation. Key component of the proton channel; it may play a direct role in the translocation of protons across the membrane. This Brassica tournefortii (Wild turnip) protein is ATP synthase subunit a (ATP6).